Here is a 277-residue protein sequence, read N- to C-terminus: Transcription antiterminator LicT (277 aa).

PRD domains are found at residues D65 to P170 and N171 to A277.

The protein belongs to the transcriptional antiterminator BglG family. Post-translationally, phosphorylated.

Functionally, mediates positive regulation of the glucanase operon (licST) by functioning as an antiterminator factor of transcription. Prevents termination at terminator lic-t. This chain is Transcription antiterminator LicT (licT), found in Bacillus subtilis (strain 168).